The sequence spans 523 residues: NAD(P)H-quinone oxidoreductase subunit 2 (523 aa).

The next 14 membrane-spanning stretches (helical) occupy residues 29–49 (AIAP…VDLA), 57–77 (WVPP…AQQW), 94–114 (LAIS…LISW), 123–143 (PIGE…LLCG), 147–167 (LVSV…LAGY), 182–202 (LLVG…LYGL), 223–243 (AALS…AVPF), 255–275 (PTPV…ALAL), 291–311 (LLFT…ALAQ), 317–337 (MLAY…VCGT), 345–365 (VLYM…IILF), 389–409 (LGLS…GFFG), 424–444 (LLVV…ISVI), and 477–497 (IALV…NPLF).

The protein belongs to the complex I subunit 2 family. NDH-1 can be composed of about 15 different subunits; different subcomplexes with different compositions have been identified which probably have different functions.

It localises to the cellular thylakoid membrane. The catalysed reaction is a plastoquinone + NADH + (n+1) H(+)(in) = a plastoquinol + NAD(+) + n H(+)(out). The enzyme catalyses a plastoquinone + NADPH + (n+1) H(+)(in) = a plastoquinol + NADP(+) + n H(+)(out). Functionally, NDH-1 shuttles electrons from an unknown electron donor, via FMN and iron-sulfur (Fe-S) centers, to quinones in the respiratory and/or the photosynthetic chain. The immediate electron acceptor for the enzyme in this species is believed to be plastoquinone. Couples the redox reaction to proton translocation, and thus conserves the redox energy in a proton gradient. Cyanobacterial NDH-1 also plays a role in inorganic carbon-concentration. This is NAD(P)H-quinone oxidoreductase subunit 2 from Prochlorococcus marinus (strain MIT 9313).